The following is a 569-amino-acid chain: Pyrophosphate--fructose 6-phosphate 1-phosphotransferase subunit beta 2 (569 aa).

Residue Gly107 participates in diphosphate binding. Asp201 contributes to the Mg(2+) binding site. Substrate is bound by residues 229–231 (TID), 268–269 (KY), 276–278 (MGR), Glu337, and 442–445 (YEGR). Catalysis depends on Asp231, which acts as the Proton acceptor.

This sequence belongs to the phosphofructokinase type A (PFKA) family. PPi-dependent PFK group II subfamily. Clade 'Long' sub-subfamily. As to quaternary structure, tetramer of two alpha (regulatory) and two beta (catalytic) chains. The cofactor is Mg(2+).

Its subcellular location is the cytoplasm. The catalysed reaction is beta-D-fructose 6-phosphate + diphosphate = beta-D-fructose 1,6-bisphosphate + phosphate + H(+). The protein operates within carbohydrate degradation; glycolysis; D-glyceraldehyde 3-phosphate and glycerone phosphate from D-glucose: step 3/4. Allosterically activated by fructose 2,6-bisphosphate. Catalytic subunit of pyrophosphate--fructose 6-phosphate 1-phosphotransferase. Catalyzes the phosphorylation of D-fructose 6-phosphate, the first committing step of glycolysis. Uses inorganic phosphate (PPi) as phosphoryl donor instead of ATP like common ATP-dependent phosphofructokinases (ATP-PFKs), which renders the reaction reversible, and can thus function both in glycolysis and gluconeogenesis. The protein is Pyrophosphate--fructose 6-phosphate 1-phosphotransferase subunit beta 2 of Arabidopsis thaliana (Mouse-ear cress).